Reading from the N-terminus, the 193-residue chain is Thymidine kinase (193 aa).

Residues 14-21 (GCMFSGKT) and 87-90 (DELH) each bind ATP. The active-site Proton acceptor is glutamate 88. Residues cysteine 147, cysteine 150, cysteine 185, and cysteine 188 each contribute to the Zn(2+) site.

This sequence belongs to the thymidine kinase family. In terms of assembly, homotetramer.

The protein localises to the cytoplasm. The catalysed reaction is thymidine + ATP = dTMP + ADP + H(+). The chain is Thymidine kinase from Roseiflexus sp. (strain RS-1).